Consider the following 210-residue polypeptide: Inner membrane-spanning protein YciB (210 aa).

Helical transmembrane passes span 12–32, 53–73, 78–98, 115–135, 153–173, and 175–195; these read EVSP…FFFA, IFIA…VSWM, LPMM…LTLW, LFGA…GYVF, WGVF…SFST, and FWVA…TLAQ.

The protein belongs to the YciB family.

The protein resides in the cell inner membrane. Its function is as follows. Plays a role in cell envelope biogenesis, maintenance of cell envelope integrity and membrane homeostasis. The polypeptide is Inner membrane-spanning protein YciB (Sinorhizobium medicae (strain WSM419) (Ensifer medicae)).